The sequence spans 224 residues: GrpE protein homolog 2, mitochondrial (224 aa).

The N-terminal 31 residues, 1-31 (MAARLLWAVRRRMQPLAAHAASEGRGWLHPF), are a transit peptide targeting the mitochondrion. Lys141 is modified (N6-acetyllysine).

This sequence belongs to the GrpE family. Probable component of the PAM complex at least composed of a mitochondrial HSP70 protein, GRPEL1 or GRPEL2, TIMM44, TIMM16/PAM16 and TIMM14/DNAJC19.

It localises to the mitochondrion matrix. In terms of biological role, essential component of the PAM complex, a complex required for the translocation of transit peptide-containing proteins from the inner membrane into the mitochondrial matrix in an ATP-dependent manner. Seems to control the nucleotide-dependent binding of mitochondrial HSP70 to substrate proteins. Stimulates ATPase activity of mt-HSP70. May also serve to modulate the interconversion of oligomeric (inactive) and monomeric (active) forms of mt-HSP70. This chain is GrpE protein homolog 2, mitochondrial (GRPEL2), found in Bos taurus (Bovine).